Consider the following 63-residue polypeptide: Translational regulator CsrA (63 aa).

It belongs to the CsrA/RsmA family. In terms of assembly, homodimer; the beta-strands of each monomer intercalate to form a hydrophobic core, while the alpha-helices form wings that extend away from the core.

The protein resides in the cytoplasm. In terms of biological role, a key translational regulator that binds mRNA to regulate translation initiation and/or mRNA stability. Mediates global changes in gene expression, shifting from rapid growth to stress survival by linking envelope stress, the stringent response and the catabolite repression systems. Usually binds in the 5'-UTR; binding at or near the Shine-Dalgarno sequence prevents ribosome-binding, repressing translation, binding elsewhere in the 5'-UTR can activate translation and/or stabilize the mRNA. Its function is antagonized by small RNA(s). This chain is Translational regulator CsrA, found in Haemophilus influenzae (strain PittEE).